A 327-amino-acid chain; its full sequence is L-lactate dehydrogenase 1 (327 aa).

NAD(+) is bound by residues Val21, Asp42, Lys47, Tyr72, and 86-87 (GA). Substrate contacts are provided by residues Gln89, Arg95, and 127-130 (NPVD). Residues 125 to 127 (AAN) and Ser150 contribute to the NAD(+) site. Residue 155–158 (DSAR) coordinates substrate. Positions 160 and 175 each coordinate beta-D-fructose 1,6-bisphosphate. Residue His182 is the Proton acceptor of the active site. Tyr227 is subject to Phosphotyrosine. Thr236 serves as a coordination point for substrate.

The protein belongs to the LDH/MDH superfamily. LDH family. As to quaternary structure, homotetramer.

It is found in the cytoplasm. It catalyses the reaction (S)-lactate + NAD(+) = pyruvate + NADH + H(+). It participates in fermentation; pyruvate fermentation to lactate; (S)-lactate from pyruvate: step 1/1. With respect to regulation, allosterically activated by fructose 1,6-bisphosphate (FBP). Functionally, catalyzes the conversion of lactate to pyruvate. This chain is L-lactate dehydrogenase 1, found in Enterococcus faecalis (strain ATCC 700802 / V583).